Here is a 219-residue protein sequence, read N- to C-terminus: Cytidylate kinase (219 aa).

21-29 (GPAASGKGT) contributes to the ATP binding site.

It belongs to the cytidylate kinase family. Type 1 subfamily.

It is found in the cytoplasm. The enzyme catalyses CMP + ATP = CDP + ADP. It carries out the reaction dCMP + ATP = dCDP + ADP. The polypeptide is Cytidylate kinase (Rickettsia typhi (strain ATCC VR-144 / Wilmington)).